The chain runs to 407 residues: Argininosuccinate synthase (407 aa).

Residues 11-19 and Ala38 each bind ATP; that span reads AYSGGLDTS. Residues Tyr89 and Ser94 each coordinate L-citrulline. ATP is bound at residue Gly119. L-aspartate is bound by residues Thr121, Asn125, and Asp126. Asn125 is a binding site for L-citrulline. Positions 129, 180, 189, 265, and 277 each coordinate L-citrulline.

It belongs to the argininosuccinate synthase family. Type 1 subfamily. In terms of assembly, homotetramer.

The protein resides in the cytoplasm. The catalysed reaction is L-citrulline + L-aspartate + ATP = 2-(N(omega)-L-arginino)succinate + AMP + diphosphate + H(+). The protein operates within amino-acid biosynthesis; L-arginine biosynthesis; L-arginine from L-ornithine and carbamoyl phosphate: step 2/3. In Magnetococcus marinus (strain ATCC BAA-1437 / JCM 17883 / MC-1), this protein is Argininosuccinate synthase.